Here is a 230-residue protein sequence, read N- to C-terminus: Membrane protein (230 aa).

Topologically, residues 1–24 (MSSPTTPVPVISWTADEAIKFLKE) are virion surface. The chain crosses the membrane as a helical span at residues 25 to 45 (WNFSLGIIVLFITIILQFGYT). At 46–55 (SRSMFVYVIK) the chain is on the intravirion side. A helical transmembrane segment spans residues 56-76 (MVILWLMWPLTIILTIFNCVY). At 77 to 84 (ALNNVYLG) the chain is on the virion surface side. Residues 85–105 (FSIVFTIVAIIMWVVYFVNSI) form a helical membrane-spanning segment. The Intravirion segment spans residues 106–228 (RLFIRTGSWW…SGMDTALLRN (123 aa)).

It belongs to the betacoronaviruses M protein family. As to quaternary structure, homomultimer. Interacts with envelope E protein in the budding compartment of the host cell, which is located between endoplasmic reticulum and the Golgi complex. Forms a complex with HE and S proteins. Interacts with nucleocapsid N protein. This interaction probably participates in RNA packaging into the virus.

Its subcellular location is the virion membrane. It localises to the host Golgi apparatus membrane. Functionally, component of the viral envelope that plays a central role in virus morphogenesis and assembly via its interactions with other viral proteins. The sequence is that of Membrane protein from Porcine hemagglutinating encephalomyelitis virus (strain 67N) (HEV-67N).